A 276-amino-acid polypeptide reads, in one-letter code: Aspartate dehydrogenase domain-containing protein (276 aa).

Belongs to the L-aspartate dehydrogenase family.

This Danio rerio (Zebrafish) protein is Aspartate dehydrogenase domain-containing protein (aspdh).